A 690-amino-acid chain; its full sequence is Protein arginine N-methyltransferase 7 (690 aa).

SAM-dependent MTase PRMT-type domains are found at residues 14–357 (QNSW…YSLW) and 366–690 (TKSV…QKKL).

It belongs to the class I-like SAM-binding methyltransferase superfamily. Protein arginine N-methyltransferase family. PRMT7 subfamily.

Functionally, essential arginine methyltransferase that can both catalyze the formation of omega-N monomethylarginine (MMA) and symmetrical dimethylarginine (sDMA). Specifically mediates the symmetrical dimethylation of arginine residues in the small nuclear ribonucleoproteins SmD1 and SmD3. This Drosophila erecta (Fruit fly) protein is Protein arginine N-methyltransferase 7 (Art7).